Here is a 477-residue protein sequence, read N- to C-terminus: Trigger factor (477 aa).

The region spanning glycine 174 to proline 261 is the PPIase FKBP-type domain. The interval valine 435 to lysine 477 is disordered. The segment covering threonine 442–threonine 470 has biased composition (low complexity).

It belongs to the FKBP-type PPIase family. Tig subfamily.

The protein localises to the cytoplasm. It catalyses the reaction [protein]-peptidylproline (omega=180) = [protein]-peptidylproline (omega=0). In terms of biological role, involved in protein export. Acts as a chaperone by maintaining the newly synthesized protein in an open conformation. Functions as a peptidyl-prolyl cis-trans isomerase. This Prochlorococcus marinus (strain MIT 9301) protein is Trigger factor.